A 326-amino-acid chain; its full sequence is DNA polymerase III subunit delta' (326 aa).

As to quaternary structure, DNA polymerase III contains a core (composed of alpha, epsilon and theta chains) that associates with a tau subunit. This core dimerizes to form the POLIII' complex. PolIII' associates with the gamma complex (composed of gamma, delta, delta', psi and chi chains) and with the beta chain to form the complete DNA polymerase III complex.

The catalysed reaction is DNA(n) + a 2'-deoxyribonucleoside 5'-triphosphate = DNA(n+1) + diphosphate. Functionally, DNA polymerase III is a complex, multichain enzyme responsible for most of the replicative synthesis in bacteria. This DNA polymerase also exhibits 3' to 5' exonuclease activity. This chain is DNA polymerase III subunit delta' (holB), found in Buchnera aphidicola subsp. Acyrthosiphon pisum (strain APS) (Acyrthosiphon pisum symbiotic bacterium).